A 416-amino-acid chain; its full sequence is Adenylosuccinate synthetase (416 aa).

GTP-binding positions include 13–19 and 41–43; these read GDEGKGK and GHT. Aspartate 14 (proton acceptor) is an active-site residue. Residues aspartate 14 and glycine 41 each coordinate Mg(2+). IMP contacts are provided by residues 14-17, 39-42, threonine 126, arginine 140, glutamine 220, threonine 235, and arginine 299; these read DEGK and NAGH. Histidine 42 (proton donor) is an active-site residue. 295–301 serves as a coordination point for substrate; the sequence is VSTGRKR. GTP-binding positions include arginine 301, 327–329, and 405–407; these read KLD and STS.

It belongs to the adenylosuccinate synthetase family. In terms of assembly, homodimer. Mg(2+) serves as cofactor.

The protein localises to the cytoplasm. The enzyme catalyses IMP + L-aspartate + GTP = N(6)-(1,2-dicarboxyethyl)-AMP + GDP + phosphate + 2 H(+). Its pathway is purine metabolism; AMP biosynthesis via de novo pathway; AMP from IMP: step 1/2. Plays an important role in the de novo pathway of purine nucleotide biosynthesis. Catalyzes the first committed step in the biosynthesis of AMP from IMP. In Campylobacter jejuni subsp. jejuni serotype O:6 (strain 81116 / NCTC 11828), this protein is Adenylosuccinate synthetase.